The following is a 484-amino-acid chain: MNGEEEFFDAVTGFDSDNSSIGEFSEANKISGMIDLDTSKSTRSGKNGEKPQQENGIQKHRTALPAPMFTRSDFSVWSILKKCIGLELSKITMPIAFNEPLSFLQRITEYMEHVYLIHKASSQSQPLERMQSVAAFAVSAVASQWERTGKPFNPLLGETYELIREDLGFRFISEQVSHHPPISAFYSEGLNQDFRFHGSIYPKLKFWGKSVEAEPRGTITLELLKHNEAYTWTNPTCCVHNVILGQLWIEQYGIVEIVNHRTGDKCILHFKPCGLFGKELHRVEGYIQDKNRKKLFIMYGKWTECLWGIDPASYESFKKQEKRGDQARKAKMDDGPEKANSDVPGDVADDVPVAQETVQVIPGSKLLWRINSRPPNSAQMYNFTSFTVSLNELESGMEKTLPPTDCRLRPDIRGMENGNMDLASQEKERLEEKQREARKERAKEDAEWRTRWFSPGNNPYTGAPDWLYAGHYFERNFSDCPDIY.

Phosphoserine is present on residues Ser19 and Ser20. Residues 35 to 61 (DLDTSKSTRSGKNGEKPQQENGIQKHR) form a disordered region. A 1,2-diacyl-sn-glycero-3-phospho-(1D-myo-inositol-4,5-bisphosphate) is bound by residues Lys90 and 178 to 179 (HH). Basic and acidic residues-rich tracts occupy residues 319–340 (KQEK…EKAN) and 424–450 (SQEK…EWRT). Disordered regions lie at residues 319-348 (KQEK…GDVA) and 423-454 (ASQE…RWFS). 431-435 (EEKQR) contributes to the a 1,2-diacyl-sn-glycero-3-phospho-(1D-myo-inositol-4,5-bisphosphate) binding site.

This sequence belongs to the OSBP family. Monomer. Homotetramer; phosphatidylinositol-4,5-bisphosphate binding promotes formation of stable tetramers. Interacts with DIAPH1. Detected in cochlea, in inner and outer hair cells in the organ of Corti (at protein level).

It localises to the cytoplasm. It is found in the cytosol. The protein resides in the lipid droplet. Its subcellular location is the cell membrane. In terms of biological role, intracellular transport protein that binds sterols and phospholipids and mediates lipid transport between intracellular compartments. Increases plasma membrane cholesterol levels and decreases phosphatidylinositol-4,5-bisphosphate levels in the cell membrane. Binds phosphoinositides, such as phosphatidylinositol-4,5-bisphosphate. Exhibits strong binding to phosphatidic acid and weak binding to phosphatidylinositol 3-phosphate. Binds cholesterol, dehydroergosterol, 22(R)-hydroxycholesterol and 25-hydroxycholesterol (in vitro). This Mus musculus (Mouse) protein is Oxysterol-binding protein-related protein 2 (Osbpl2).